Reading from the N-terminus, the 312-residue chain is tRNA uridine(34) hydroxylase (312 aa).

The Rhodanese domain occupies 147–237 (SDRNVIFIDM…GILGYVHDAN (91 aa)). The active-site Cysteine persulfide intermediate is the C201.

This sequence belongs to the TrhO family.

It carries out the reaction uridine(34) in tRNA + AH2 + O2 = 5-hydroxyuridine(34) in tRNA + A + H2O. Its function is as follows. Catalyzes oxygen-dependent 5-hydroxyuridine (ho5U) modification at position 34 in tRNAs. The sequence is that of tRNA uridine(34) hydroxylase from Buchnera aphidicola subsp. Schizaphis graminum (strain Sg).